Reading from the N-terminus, the 180-residue chain is NAD(P)H-quinone oxidoreductase subunit I, chloroplastic (180 aa).

4Fe-4S ferredoxin-type domains follow at residues 55-84 and 95-124; these read GRIH…VDWR and LNYS…MTEE. Positions 64, 67, 70, 74, 104, 107, 110, and 114 each coordinate [4Fe-4S] cluster.

This sequence belongs to the complex I 23 kDa subunit family. NDH is composed of at least 16 different subunits, 5 of which are encoded in the nucleus. [4Fe-4S] cluster is required as a cofactor.

It localises to the plastid. Its subcellular location is the chloroplast thylakoid membrane. The enzyme catalyses a plastoquinone + NADH + (n+1) H(+)(in) = a plastoquinol + NAD(+) + n H(+)(out). It catalyses the reaction a plastoquinone + NADPH + (n+1) H(+)(in) = a plastoquinol + NADP(+) + n H(+)(out). Its function is as follows. NDH shuttles electrons from NAD(P)H:plastoquinone, via FMN and iron-sulfur (Fe-S) centers, to quinones in the photosynthetic chain and possibly in a chloroplast respiratory chain. The immediate electron acceptor for the enzyme in this species is believed to be plastoquinone. Couples the redox reaction to proton translocation, and thus conserves the redox energy in a proton gradient. The chain is NAD(P)H-quinone oxidoreductase subunit I, chloroplastic from Triticum aestivum (Wheat).